Reading from the N-terminus, the 404-residue chain is Argininosuccinate synthase (404 aa).

Residues 10–18 and alanine 38 contribute to the ATP site; that span reads AYSGGVDTS. Position 89 (tyrosine 89) interacts with L-citrulline. Glycine 119 serves as a coordination point for ATP. Residues threonine 121, asparagine 125, and aspartate 126 each coordinate L-aspartate. L-citrulline is bound at residue asparagine 125. L-citrulline is bound by residues arginine 129, serine 177, serine 186, glutamate 262, and tyrosine 274.

This sequence belongs to the argininosuccinate synthase family. Type 1 subfamily. Homotetramer.

It is found in the cytoplasm. It carries out the reaction L-citrulline + L-aspartate + ATP = 2-(N(omega)-L-arginino)succinate + AMP + diphosphate + H(+). It functions in the pathway amino-acid biosynthesis; L-arginine biosynthesis; L-arginine from L-ornithine and carbamoyl phosphate: step 2/3. The polypeptide is Argininosuccinate synthase (Prochlorococcus marinus (strain MIT 9301)).